We begin with the raw amino-acid sequence, 69 residues long: DNA gyrase inhibitor YacG (69 aa).

The Zn(2+) site is built by C7, C10, C26, and C30.

This sequence belongs to the DNA gyrase inhibitor YacG family. As to quaternary structure, interacts with GyrB. Zn(2+) serves as cofactor.

In terms of biological role, inhibits all the catalytic activities of DNA gyrase by preventing its interaction with DNA. Acts by binding directly to the C-terminal domain of GyrB, which probably disrupts DNA binding by the gyrase. This Shewanella putrefaciens (strain CN-32 / ATCC BAA-453) protein is DNA gyrase inhibitor YacG.